We begin with the raw amino-acid sequence, 501 residues long: Phenylalanine--tRNA ligase alpha subunit (501 aa).

L-phenylalanine-binding residues include threonine 340 and phenylalanine 423. Glutamate 425 contributes to the Mg(2+) binding site. Phenylalanine 448 is a binding site for L-phenylalanine.

This sequence belongs to the class-II aminoacyl-tRNA synthetase family. Phe-tRNA synthetase alpha subunit type 2 subfamily. In terms of assembly, tetramer of two alpha and two beta subunits. Requires Mg(2+) as cofactor.

Its subcellular location is the cytoplasm. The catalysed reaction is tRNA(Phe) + L-phenylalanine + ATP = L-phenylalanyl-tRNA(Phe) + AMP + diphosphate + H(+). The polypeptide is Phenylalanine--tRNA ligase alpha subunit (Methanococcus vannielii (strain ATCC 35089 / DSM 1224 / JCM 13029 / OCM 148 / SB)).